We begin with the raw amino-acid sequence, 171 residues long: Der GTPase-activating protein YihI (171 aa).

2 disordered regions span residues 1–99 and 145–171; these read MKKP…PQAE and GLSYEDDEDDEEEEKQDDMMRLLKGGN. Positions 20 to 30 are enriched in basic and acidic residues; it reads TREELNQEARD. The span at 40 to 59 shows a compositional bias: low complexity; that stretch reads HSAGSRANGSSASGSTAQNS. Residues 148–160 are compositionally biased toward acidic residues; that stretch reads YEDDEDDEEEEKQ.

The protein belongs to the YihI family. In terms of assembly, interacts with Der.

Its function is as follows. A GTPase-activating protein (GAP) that modifies Der/EngA GTPase function. May play a role in ribosome biogenesis. This chain is Der GTPase-activating protein YihI, found in Enterobacter sp. (strain 638).